The chain runs to 202 residues: MEHYISLFVRAVFIENMALAFFLGMCTFIAISKKVETAIGLGIAVIVVQTITVPANNLIYTYLLKSGALAWAGLPEVDLSFLGLLSYIGVIAAIVQILEMTLDKYVPSLYNALGVFLPLITVNCAIMGGTLFMVERDYNLGESVVYGMGSGLSWALAIALLAGIREKLKYSDVPDGLQGLGITFITIGLMSLGFMSFSGVQL.

The next 6 helical transmembrane spans lie at 11-31 (AVFI…FIAI), 35-55 (VETA…TVPA), 79-99 (LSFL…QILE), 114-134 (GVFL…LFMV), 144-164 (VVYG…LAGI), and 180-200 (LGIT…FSGV).

It belongs to the NqrDE/RnfAE family. As to quaternary structure, composed of six subunits; NqrA, NqrB, NqrC, NqrD, NqrE and NqrF.

It localises to the cell inner membrane. The catalysed reaction is a ubiquinone + n Na(+)(in) + NADH + H(+) = a ubiquinol + n Na(+)(out) + NAD(+). Its function is as follows. NQR complex catalyzes the reduction of ubiquinone-1 to ubiquinol by two successive reactions, coupled with the transport of Na(+) ions from the cytoplasm to the periplasm. NqrA to NqrE are probably involved in the second step, the conversion of ubisemiquinone to ubiquinol. The chain is Na(+)-translocating NADH-quinone reductase subunit E from Stutzerimonas stutzeri (strain A1501) (Pseudomonas stutzeri).